Reading from the N-terminus, the 448-residue chain is Exoglucanase GH7B (448 aa).

A signal peptide spans 1–17 (MSLAVVFLLGFLAVSHG). A Pyrrolidone carboxylic acid modification is found at Gln18. 2 disulfide bridges follow: Cys62–Cys83 and Cys73–Cys79. Residues Tyr97, 119–120 (DI), and Lys197 each bind substrate. 6 disulfides stabilise this stretch: Cys154/Cys415, Cys188/Cys226, Cys192/Cys225, Cys246/Cys271, Cys254/Cys259, and Cys276/Cys350. Glu228 (nucleophile) is an active-site residue. Residues 230–233 (DIWE) and His244 each bind substrate. The Proton donor/acceptor role is filled by Glu233. 2 residues coordinate substrate: Arg266 and Asp274. Positions 396 and 412 each coordinate substrate.

Belongs to the glycosyl hydrolase 7 (cellulase C) family. In terms of assembly, monomer. As to expression, highly expressed in the hepatopancreas (at protein level). Little or no expression detected in the hindgut or the rest of the body (at protein level).

The protein localises to the secreted. It catalyses the reaction Hydrolysis of (1-&gt;4)-beta-D-glucosidic linkages in cellulose and cellotetraose, releasing cellobiose from the non-reducing ends of the chains.. Functionally, exocellobiohydrolase (CBH) that catalyzes the hydrolysis of 1,4-beta-D-glucosidic bonds in cellulose to release the disaccharide cellobiose. The degradation of cellulose involves an interplay between different cellulolytic enzymes. Hydrolysis starts with endoglucanases (EGs), which cut internal beta-1,4-glucosidic bonds in cellulose to reduce the polymerization degree of the substrate and create new chain ends for exocellobiohydrolases (CBHs). The CBHs release the disaccharide cellobiose from the non-reducing end of the cellulose polymer chain. Finally, beta-1,4-glucosidases hydrolyze the cellobiose and other short cello-oligosaccharides into glucose units. The protein is Exoglucanase GH7B of Limnoria quadripunctata (Gribble).